We begin with the raw amino-acid sequence, 256 residues long: Chitinase 11 (256 aa).

A signal peptide spans 1-22 (MRRLLPLAGATLLIAAAGGASG). Disulfide bonds link Cys-48-Cys-109 and Cys-214-Cys-247. The Proton donor role is filled by Glu-91.

Belongs to the glycosyl hydrolase 19 family. Chitinase class II subfamily. Expressed in leaves and at lower levels in roots, sheaths and meristems.

It catalyses the reaction Random endo-hydrolysis of N-acetyl-beta-D-glucosaminide (1-&gt;4)-beta-linkages in chitin and chitodextrins.. This chain is Chitinase 11 (Cht11), found in Oryza sativa subsp. japonica (Rice).